Reading from the N-terminus, the 108-residue chain is Protein Asterix (108 aa).

The tract at residues 1 to 29 (MNMTVDPRRKEKINRYKAPKNQGQSGGAN) is disordered. The helical transmembrane segment at 80-96 (VLSSFMLSVSAVVMSYL) threads the bilayer.

It belongs to the Asterix family.

The protein resides in the membrane. This Drosophila melanogaster (Fruit fly) protein is Protein Asterix.